The primary structure comprises 690 residues: Putative glycerophosphocholine phosphodiesterase GPCPD1 homolog 1 (690 aa).

The CBM20 domain occupies 1 to 122 (MDQDYKAHFK…RKNITDQFGS (122 aa)). Residues 344–654 (MLQIGHRGMG…DRIGEDEVLK (311 aa)) form the GP-PDE domain. The tract at residues 670–690 (ARSQHNSRSPSMSRRCMSTVE) is disordered. Positions 676 to 690 (SRSPSMSRRCMSTVE) are enriched in low complexity.

This sequence belongs to the glycerophosphoryl diester phosphodiesterase family.

This chain is Putative glycerophosphocholine phosphodiesterase GPCPD1 homolog 1, found in Caenorhabditis elegans.